Reading from the N-terminus, the 160-residue chain is Ribosome maturation factor RimP (160 aa).

It belongs to the RimP family.

It is found in the cytoplasm. Functionally, required for maturation of 30S ribosomal subunits. This Citrifermentans bemidjiense (strain ATCC BAA-1014 / DSM 16622 / JCM 12645 / Bem) (Geobacter bemidjiensis) protein is Ribosome maturation factor RimP.